The following is a 468-amino-acid chain: Sushi repeat-containing protein SRPX2 (468 aa).

The N-terminal stretch at 1-25 (MMTSPLTQRGALSLLLLLMPAVTPT) is a signal peptide. Sushi domains lie at 72–122 (ATCY…YCRQ), 123–181 (IRCH…VCVD), and 265–324 (RRCP…VCTP). 4 disulfides stabilise this stretch: Cys-74–Cys-108, Cys-94–Cys-120, Cys-125–Cys-166, and Cys-152–Cys-179. Positions 180 to 264 (VDIDPPKIRC…SCKFIVKVQV (85 aa)) constitute an HYR domain. Cystine bridges form between Cys-267-Cys-309 and Cys-295-Cys-322.

Forms homooligomers. Interacts with PLAUR (via the UPAR/Ly6 domains), ADAMTS4 and CTSB. Interacts with HGF; the interaction increases the mitogenic activity of HGF. Post-translationally, contains chondroitin sulfate chains. In terms of tissue distribution, expressed in angiogenic endothelial cells (at protein level).

The protein localises to the secreted. The protein resides in the cytoplasm. It localises to the cell surface. It is found in the synapse. Acts as a ligand for the urokinase plasminogen activator surface receptor. Plays a role in angiogenesis by inducing endothelial cell migration and the formation of vascular network (cords). Involved in cellular migration and adhesion. Increases the phosphorylation levels of FAK. Interacts with and increases the mitogenic activity of HGF. Promotes synapse formation. Required for ultrasonic vocalizations. This chain is Sushi repeat-containing protein SRPX2 (Srpx2), found in Mus musculus (Mouse).